Consider the following 759-residue polypeptide: Probable Na(+)/H(+) antiporter C3A11.09 (759 aa).

A run of 11 helical transmembrane segments spans residues 12–32 (HLAYAIIGGFTSLFMLCSLII), 36–56 (LFLGEATMATATGLIFGPYVA), 105–125 (MLLPVMIFGWLVSTGFMYALI), 133–153 (SLAIAACITATDPVLASSIVG), 172–192 (ESGCNDGMAIPFLYLAIYLII), 206–226 (IIILYECTFGCVLGAIIGVIA), 244–264 (FLVFYFVLALFCGGIGTIIGV), 295–315 (VIDLLLNLSFFVYVGAIMPWP), 319–339 (MPHMDLSVWRLVVLAICILIA), 361–381 (ALFAGHFGPIGVGALYTCLVA), and 415–435 (VVCFLVLSSIIVHGSSIAFFM). Residue threonine 442 is modified to Phosphothreonine. The residue at position 446 (serine 446) is a Phosphoserine. Threonine 448 is modified (phosphothreonine). Composition is skewed to basic and acidic residues over residues 514–529 (LREERAESPRGGHYDA), 537–547 (YESRQPRRSNE), 590–601 (IDEKLAQGDPKA), 622–647 (NLHEPDDERQREPTLGHIESSIENHR), and 655–671 (SESHLRENSVERRRREQ). Disordered stretches follow at residues 514–558 (LREE…NPGD), 578–606 (SHTSSRDANGPSIDEKLAQGDPKAKSFGR), and 622–759 (NLHE…RAWE). Polar residues predominate over residues 696–713 (NENNESSSDTRNGLLSDN). N-linked (GlcNAc...) asparagine glycans are attached at residues asparagine 699 and asparagine 713. The span at 724–733 (RAPSAAVSSE) shows a compositional bias: low complexity. Phosphoserine is present on serine 735.

The protein belongs to the fungal Na(+)/H(+) exchanger family.

It is found in the membrane. In terms of biological role, sodium export from cell, takes up external protons in exchange for internal sodium ions. The sequence is that of Probable Na(+)/H(+) antiporter C3A11.09 (sod22) from Schizosaccharomyces pombe (strain 972 / ATCC 24843) (Fission yeast).